The primary structure comprises 385 residues: Methylthioribose-1-phosphate isomerase (385 aa).

The active-site Proton donor is the aspartate 255.

This sequence belongs to the eIF-2B alpha/beta/delta subunits family. MtnA subfamily.

Its subcellular location is the cytoplasm. The protein resides in the nucleus. It carries out the reaction 5-(methylsulfanyl)-alpha-D-ribose 1-phosphate = 5-(methylsulfanyl)-D-ribulose 1-phosphate. Its pathway is amino-acid biosynthesis; L-methionine biosynthesis via salvage pathway; L-methionine from S-methyl-5-thio-alpha-D-ribose 1-phosphate: step 1/6. Catalyzes the interconversion of methylthioribose-1-phosphate (MTR-1-P) into methylthioribulose-1-phosphate (MTRu-1-P). In Aspergillus clavatus (strain ATCC 1007 / CBS 513.65 / DSM 816 / NCTC 3887 / NRRL 1 / QM 1276 / 107), this protein is Methylthioribose-1-phosphate isomerase (mri1).